A 480-amino-acid polypeptide reads, in one-letter code: Phenolic acid decarboxylase (480 aa).

Mn(2+) contacts are provided by asparagine 163, histidine 185, and glutamate 227. Prenylated FMN contacts are provided by residues asparagine 163 to arginine 168 and methionine 184 to histidine 185. The Proton donor role is filled by glutamate 278. A disordered region spans residues threonine 443–glutamate 466.

It belongs to the UbiD family. YclC subfamily. Homohexamer. Prenylated FMN is required as a cofactor. The cofactor is Mn(2+).

The enzyme catalyses 4-hydroxybenzoate + H(+) = phenol + CO2. It catalyses the reaction 3,4-dihydroxybenzoate + H(+) = catechol + CO2. Its activity is regulated as follows. Inhibited by Zn(2+), (2,3,4)-trihydroxybenzoate and (3,4,5)-trihydroxybenzoate. Ammonium and rubidium ions decrease the activity of the carboxylation of 3,4-dihydroxybenzoate by about 20%. Functionally, involved in the non-oxidative decarboxylation and detoxification of phenolic derivatives under anaerobic conditions. Oxygen-sensitive phenolic acid decarboxylase that catalyzes the reversible decarboxylation of 4-hydroxybenzoate and 3,4-dihydroxybenzoate. The sequence is that of Phenolic acid decarboxylase from Sedimentibacter hydroxybenzoicus (Clostridium hydroxybenzoicum).